The primary structure comprises 256 residues: H-2 class II histocompatibility antigen, A-D alpha chain (256 aa).

Positions Met1–Gly23 are cleaved as a signal peptide. The segment at Glu24–Asn111 is alpha-1. Over Glu24–Glu218 the chain is Extracellular. The tract at residues Glu112 to Trp205 is alpha-2. Positions Pro114–Glu206 constitute an Ig-like C1-type domain. A disulfide bond links Cys134 and Cys190. An N-linked (GlcNAc...) asparagine glycan is attached at Asn145. The segment at Glu206 to Glu218 is connecting peptide. Residues Thr219 to Leu244 traverse the membrane as a helical segment. The Cytoplasmic segment spans residues Arg245–Leu256.

This sequence belongs to the MHC class II family.

It localises to the membrane. The sequence is that of H-2 class II histocompatibility antigen, A-D alpha chain (H2-Aa) from Mus musculus (Mouse).